The chain runs to 338 residues: Lumican (338 aa).

The signal sequence occupies residues 1–18 (MNVCTFTLVLALVGSVSG). Glutamine 19 is modified (pyrrolidone carboxylic acid). Sulfotyrosine is present on residues tyrosine 20, tyrosine 21, tyrosine 23, and tyrosine 30. Residues 28 to 66 (FMYGELSPNCAPECNCPHSYPTAMYCDDLKLKSVPMVPP) form the LRRNT domain. LRR repeat units follow at residues 67-88 (GIKY…AFEN), 91-114 (DLQW…VFSK), 117-137 (QLKK…PLPK), 138-159 (SLQD…DGLV), 160-181 (NLTF…ASLK), 185-205 (SLEY…GLPT), 206-227 (SLLT…YFNR), and 230-250 (GLQY…PGNS). An N-linked (GlcNAc...) (keratan sulfate) asparagine glycan is attached at asparagine 88. An N-linked (GlcNAc...) (keratan sulfate) asparagine glycan is attached at asparagine 127. Asparagine 160 carries N-linked (GlcNAc...) (keratan sulfate) asparagine glycosylation. An N-linked (GlcNAc...) (keratan sulfate) asparagine glycan is attached at asparagine 252. LRR repeat units lie at residues 255 to 276 (SLLE…NENL) and 277 to 296 (ENYY…SFCK). A disulfide bridge links cysteine 295 with cysteine 328. Serine 304 bears the Phosphoserine mark. The LRR 11 repeat unit spans residues 305 to 326 (KIKHLRLDGNPLTQSSLPPDMY).

This sequence belongs to the small leucine-rich proteoglycan (SLRP) family. SLRP class II subfamily. Binds to laminin. Contains keratan sulfate.

The protein resides in the secreted. It localises to the extracellular space. The protein localises to the extracellular matrix. The sequence is that of Lumican (Lum) from Rattus norvegicus (Rat).